A 185-amino-acid polypeptide reads, in one-letter code: Large ribosomal subunit protein uL5 (185 aa).

The protein belongs to the universal ribosomal protein uL5 family. In terms of assembly, part of the 50S ribosomal subunit; part of the 5S rRNA/L5/L18/L25 subcomplex. Contacts the 5S rRNA and the P site tRNA. Forms a bridge to the 30S subunit in the 70S ribosome.

In terms of biological role, this is one of the proteins that bind and probably mediate the attachment of the 5S RNA into the large ribosomal subunit, where it forms part of the central protuberance. In the 70S ribosome it contacts protein S13 of the 30S subunit (bridge B1b), connecting the 2 subunits; this bridge is implicated in subunit movement. Contacts the P site tRNA; the 5S rRNA and some of its associated proteins might help stabilize positioning of ribosome-bound tRNAs. This Phocaeicola vulgatus (strain ATCC 8482 / DSM 1447 / JCM 5826 / CCUG 4940 / NBRC 14291 / NCTC 11154) (Bacteroides vulgatus) protein is Large ribosomal subunit protein uL5.